The primary structure comprises 246 residues: Small ribosomal subunit protein uS2 (246 aa).

Belongs to the universal ribosomal protein uS2 family.

This chain is Small ribosomal subunit protein uS2, found in Azotobacter vinelandii (strain DJ / ATCC BAA-1303).